We begin with the raw amino-acid sequence, 535 residues long: GMP synthase [glutamine-hydrolyzing] (535 aa).

Positions 24-217 (KILIVDFGSQ…VRKVAGLTGD (194 aa)) constitute a Glutamine amidotransferase type-1 domain. Cys101 serves as the catalytic Nucleophile. Active-site residues include His191 and Glu193. Residues 218 to 410 (WTMRAFREEA…LGLPEIFVGR (193 aa)) form the GMPS ATP-PPase domain. 245-251 (SGGVDSS) contributes to the ATP binding site.

Homodimer.

It carries out the reaction XMP + L-glutamine + ATP + H2O = GMP + L-glutamate + AMP + diphosphate + 2 H(+). It participates in purine metabolism; GMP biosynthesis; GMP from XMP (L-Gln route): step 1/1. Its function is as follows. Catalyzes the synthesis of GMP from XMP. This chain is GMP synthase [glutamine-hydrolyzing], found in Nitrobacter winogradskyi (strain ATCC 25391 / DSM 10237 / CIP 104748 / NCIMB 11846 / Nb-255).